The following is a 573-amino-acid chain: Sulfite reductase [NADPH] hemoprotein beta-component (573 aa).

Residues Cys-438, Cys-444, Cys-483, and Cys-487 each contribute to the [4Fe-4S] cluster site. Siroheme is bound at residue Cys-487.

It belongs to the nitrite and sulfite reductase 4Fe-4S domain family. As to quaternary structure, alpha(8)-beta(8). The alpha component is a flavoprotein, the beta component is a hemoprotein. Siroheme serves as cofactor. Requires [4Fe-4S] cluster as cofactor.

It catalyses the reaction hydrogen sulfide + 3 NADP(+) + 3 H2O = sulfite + 3 NADPH + 4 H(+). It participates in sulfur metabolism; hydrogen sulfide biosynthesis; hydrogen sulfide from sulfite (NADPH route): step 1/1. Its function is as follows. Component of the sulfite reductase complex that catalyzes the 6-electron reduction of sulfite to sulfide. This is one of several activities required for the biosynthesis of L-cysteine from sulfate. The polypeptide is Sulfite reductase [NADPH] hemoprotein beta-component (Staphylococcus haemolyticus (strain JCSC1435)).